Here is a 364-residue protein sequence, read N- to C-terminus: Chaperone protein DnaJ (364 aa).

The 66-residue stretch at D4–G69 folds into the J domain. The CR-type zinc finger occupies G135–Q213. Zn(2+)-binding residues include C148, C151, C165, C168, C187, C190, C201, and C204. 4 CXXCXGXG motif repeats span residues C148–K155, C165–G172, C187–G194, and C201–G208.

Belongs to the DnaJ family. As to quaternary structure, homodimer. It depends on Zn(2+) as a cofactor.

Its subcellular location is the cytoplasm. Its function is as follows. Participates actively in the response to hyperosmotic and heat shock by preventing the aggregation of stress-denatured proteins and by disaggregating proteins, also in an autonomous, DnaK-independent fashion. Unfolded proteins bind initially to DnaJ; upon interaction with the DnaJ-bound protein, DnaK hydrolyzes its bound ATP, resulting in the formation of a stable complex. GrpE releases ADP from DnaK; ATP binding to DnaK triggers the release of the substrate protein, thus completing the reaction cycle. Several rounds of ATP-dependent interactions between DnaJ, DnaK and GrpE are required for fully efficient folding. Also involved, together with DnaK and GrpE, in the DNA replication of plasmids through activation of initiation proteins. The protein is Chaperone protein DnaJ of Borrelia garinii subsp. bavariensis (strain ATCC BAA-2496 / DSM 23469 / PBi) (Borreliella bavariensis).